Reading from the N-terminus, the 252-residue chain is Imidazole glycerol phosphate synthase subunit HisF (252 aa).

Residues Asp-11 and Asp-130 contribute to the active site.

Belongs to the HisA/HisF family. Heterodimer of HisH and HisF.

Its subcellular location is the cytoplasm. The catalysed reaction is 5-[(5-phospho-1-deoxy-D-ribulos-1-ylimino)methylamino]-1-(5-phospho-beta-D-ribosyl)imidazole-4-carboxamide + L-glutamine = D-erythro-1-(imidazol-4-yl)glycerol 3-phosphate + 5-amino-1-(5-phospho-beta-D-ribosyl)imidazole-4-carboxamide + L-glutamate + H(+). It participates in amino-acid biosynthesis; L-histidine biosynthesis; L-histidine from 5-phospho-alpha-D-ribose 1-diphosphate: step 5/9. Its function is as follows. IGPS catalyzes the conversion of PRFAR and glutamine to IGP, AICAR and glutamate. The HisF subunit catalyzes the cyclization activity that produces IGP and AICAR from PRFAR using the ammonia provided by the HisH subunit. The chain is Imidazole glycerol phosphate synthase subunit HisF from Geobacillus kaustophilus (strain HTA426).